Reading from the N-terminus, the 196-residue chain is Pyridoxal 5'-phosphate synthase subunit PdxT (196 aa).

Residue 47 to 49 (GES) coordinates L-glutamine. Cys79 serves as the catalytic Nucleophile. L-glutamine-binding positions include Arg106 and 134-135 (IR). Catalysis depends on charge relay system residues His170 and Glu172.

Belongs to the glutaminase PdxT/SNO family. As to quaternary structure, in the presence of PdxS, forms a dodecamer of heterodimers. Only shows activity in the heterodimer.

The catalysed reaction is aldehydo-D-ribose 5-phosphate + D-glyceraldehyde 3-phosphate + L-glutamine = pyridoxal 5'-phosphate + L-glutamate + phosphate + 3 H2O + H(+). It carries out the reaction L-glutamine + H2O = L-glutamate + NH4(+). It functions in the pathway cofactor biosynthesis; pyridoxal 5'-phosphate biosynthesis. Its function is as follows. Catalyzes the hydrolysis of glutamine to glutamate and ammonia as part of the biosynthesis of pyridoxal 5'-phosphate. The resulting ammonia molecule is channeled to the active site of PdxS. The polypeptide is Pyridoxal 5'-phosphate synthase subunit PdxT (Bacillus thuringiensis subsp. konkukian (strain 97-27)).